A 160-amino-acid polypeptide reads, in one-letter code: MGFSHITHLDLKRFAGLSQRTSNALEMTEERRIPALWDQLWKQDMSALLSQAEKDKSIIALYSNYEQETNGFYTFSVGTFQEYDDILPGPYENIDLPASAYAVFTSRIGPIEEIVLETWKEIWTWDKRHLRTFTGDFEMYDQNAAVPQRAQVNIYVAIKK.

The chain is Putative transcriptional regulator protein YobU (yobU) from Bacillus subtilis (strain 168).